A 314-amino-acid polypeptide reads, in one-letter code: Mitochondrial 2-oxoglutarate/malate carrier protein (314 aa).

The residue at position 2 (alanine 2) is an N-acetylalanine. Phosphoserine is present on serine 6. Solcar repeat units lie at residues 23 to 108, 117 to 208, and 217 to 306; these read VKFL…LFER, PGFL…SKQF, and DNIL…MNKA. The chain crosses the membrane as a helical span at residues 24–42; the sequence is KFLFGGLAGMGATVFVQPL. Lysine 57 carries the N6-succinyllysine modification. Position 73 is an N6-acetyllysine (lysine 73). A helical membrane pass occupies residues 83 to 101; the sequence is GLSAGLLRQATYTTTRLGI. A Phosphotyrosine modification is found at tyrosine 102. 3 consecutive transmembrane segments (helical) span residues 119–140, 183–202, and 222–240; these read FLLK…GTPA, GCIP…LASY, and HFCA…SMPV. An N6-acetyllysine modification is found at lysine 256. A helical transmembrane segment spans residues 281-300; the sequence is GFTPYYARLGPHTVLTFIFL.

The protein belongs to the mitochondrial carrier (TC 2.A.29) family. In terms of assembly, interacts with SMIM26.

It is found in the mitochondrion inner membrane. The catalysed reaction is (S)-malate(in) + 2-oxoglutarate(out) = (S)-malate(out) + 2-oxoglutarate(in). It catalyses the reaction malonate(in) + 2-oxoglutarate(out) = malonate(out) + 2-oxoglutarate(in). The enzyme catalyses succinate(in) + 2-oxoglutarate(out) = succinate(out) + 2-oxoglutarate(in). It carries out the reaction maleate(in) + 2-oxoglutarate(out) = maleate(out) + 2-oxoglutarate(in). The catalysed reaction is oxaloacetate(in) + 2-oxoglutarate(out) = oxaloacetate(out) + 2-oxoglutarate(in). Functionally, catalyzes the transport of 2-oxoglutarate (alpha-oxoglutarate) across the inner mitochondrial membrane in an electroneutral exchange for malate. Can also exchange 2-oxoglutarate for other dicarboxylic acids such as malonate, succinate, maleate and oxaloacetate, although with lower affinity. Contributes to several metabolic processes, including the malate-aspartate shuttle, the oxoglutarate/isocitrate shuttle, in gluconeogenesis from lactate, and in nitrogen metabolism. Maintains mitochondrial fusion and fission events, and the organization and morphology of cristae. Involved in the regulation of apoptosis. Helps protect from cytotoxic-induced apoptosis by modulating glutathione levels in mitochondria. The polypeptide is Mitochondrial 2-oxoglutarate/malate carrier protein (Slc25a11) (Mus musculus (Mouse)).